The primary structure comprises 286 residues: Oxidase hkm6 (286 aa).

Cu cation contacts are provided by H16, H25, and H215.

The protein belongs to the tyrosinase family. The cofactor is Cu(2+).

It participates in secondary metabolite biosynthesis. Functionally, oxidase; part of the gene cluster that mediates the biosynthesis of hancockiamides, an unusual new family of N-cinnamoylated piperazines. The NRPS hkm10 and the NmrA-like reductase hkm9 are proposed to convert two molecules of L-Phe to the intermediary piperazine called xenocockiamide A. Xenocockiamide A is then converted to hancockiamide D via a series of hydroxylations and O-methylations. The tyrosinase hkm6 may catalyze an aromatic hydroxylation, then the 2-oxoglutarate-dependent Fe(II) dioxygenase hkm4 and the FAD-dependent phenol hydroxylase hkm7 may catalyze consecutive hydroxylations to install 2 more hydroxy groups, and the methyltransferase hkm8 probably catalyzes two methylations using 2 molecules of S-adenosyl-L-methionine (SAM). The NRPS hkm11 activates and transfers trans-cinnamate supplied by the PAL hkm12 to hancockiamide D and produces hancockiamide A. NRPS Hkm11 has the flexibility to tolerate the bulky hancockiamide G as a substrate and the absence of the acetyl-transferase hkm3 opens up the opportunity for hkm11 to introduce a second N-cinnamoyl moiety. The cytochrome P450 monooxygenase hkm5 catalyzes the methylenedioxy bridge formation, converting hancockiamide A into hancockiamide G. Hkm5 can also convert hancockiamide B into hancockiamide C, and hancockiamide D into hancockiamide H. The N-acetyltransferase hkm3 finally transfers an acetyl group to 1-N of piperazine, converting hancockiamide A into hancockiamide B and hancockiamide G into hancockiamide C. In Aspergillus hancockii, this protein is Oxidase hkm6.